The following is a 258-amino-acid chain: Imidazole glycerol phosphate synthase subunit HisF (258 aa).

Catalysis depends on residues D11 and D130.

Belongs to the HisA/HisF family. In terms of assembly, heterodimer of HisH and HisF.

Its subcellular location is the cytoplasm. It carries out the reaction 5-[(5-phospho-1-deoxy-D-ribulos-1-ylimino)methylamino]-1-(5-phospho-beta-D-ribosyl)imidazole-4-carboxamide + L-glutamine = D-erythro-1-(imidazol-4-yl)glycerol 3-phosphate + 5-amino-1-(5-phospho-beta-D-ribosyl)imidazole-4-carboxamide + L-glutamate + H(+). It functions in the pathway amino-acid biosynthesis; L-histidine biosynthesis; L-histidine from 5-phospho-alpha-D-ribose 1-diphosphate: step 5/9. Functionally, IGPS catalyzes the conversion of PRFAR and glutamine to IGP, AICAR and glutamate. The HisF subunit catalyzes the cyclization activity that produces IGP and AICAR from PRFAR using the ammonia provided by the HisH subunit. This Roseiflexus sp. (strain RS-1) protein is Imidazole glycerol phosphate synthase subunit HisF.